A 223-amino-acid polypeptide reads, in one-letter code: Putative germin-like protein 2-3 (223 aa).

The first 28 residues, 1–28, serve as a signal peptide directing secretion; it reads MAAIRASFLLAAAALLALWCSDHGGVVA. Residues cysteine 38 and cysteine 53 are joined by a disulfide bond. The region spanning 67–217 is the Cupin type-1 domain; sequence SGLHMAGNTT…AFQVEKTVVD (151 aa). A glycan (N-linked (GlcNAc...) asparagine) is linked at asparagine 74. Mn(2+) contacts are provided by histidine 115, histidine 117, glutamate 122, and histidine 163.

This sequence belongs to the germin family. As to quaternary structure, oligomer (believed to be a pentamer but probably hexamer).

The protein localises to the secreted. It is found in the extracellular space. It localises to the apoplast. May play a role in plant defense. Probably has no oxalate oxidase activity even if the active site is conserved. The protein is Putative germin-like protein 2-3 of Oryza sativa subsp. japonica (Rice).